The primary structure comprises 118 residues: Protein YoeF (118 aa).

The protein is Protein YoeF (yoeF) of Escherichia coli (strain K12).